Reading from the N-terminus, the 312-residue chain is D-alanine--D-alanine ligase (312 aa).

Residues 108-308 (KLVWQQTGIP…YSELVVKVLS (201 aa)) form the ATP-grasp domain. 138-193 (VAKLGMPLFVKPASEGSSVAVEKVKSADALPAALEEAAKHDKIVIVEKSIEGGGEY) lines the ATP pocket. Residues D262, E275, and N277 each contribute to the Mg(2+) site.

This sequence belongs to the D-alanine--D-alanine ligase family. Requires Mg(2+) as cofactor. Mn(2+) is required as a cofactor.

The protein localises to the cytoplasm. It catalyses the reaction 2 D-alanine + ATP = D-alanyl-D-alanine + ADP + phosphate + H(+). It participates in cell wall biogenesis; peptidoglycan biosynthesis. Its function is as follows. Cell wall formation. This Burkholderia thailandensis (strain ATCC 700388 / DSM 13276 / CCUG 48851 / CIP 106301 / E264) protein is D-alanine--D-alanine ligase.